A 349-amino-acid chain; its full sequence is Estrogen receptor (349 aa).

The nuclear receptor DNA-binding region spans 1-5 (YEVGM). Residues 1–38 (YEVGMMKGGIRKDRRGGRMLKHKRQREENDSRNAGALT) are disordered. Residues 12-24 (KDRRGGRMLKHKR) are compositionally biased toward basic residues. An NR LBD domain is found at 65-301 (TADQMVSALL…DLLLEMLDAH (237 aa)). Residues 306-327 (PAAKGSPPSEDDPLNQLAVPSP) form a disordered region.

This sequence belongs to the nuclear hormone receptor family. NR3 subfamily. In terms of assembly, binds DNA as a homodimer. Can form a heterodimer with ER-beta.

It is found in the nucleus. In terms of biological role, the steroid hormones and their receptors are involved in the regulation of eukaryotic gene expression and affect cellular proliferation and differentiation in target tissues. The polypeptide is Estrogen receptor (ESR1) (Anolis carolinensis (Green anole)).